A 478-amino-acid chain; its full sequence is Cytochrome c-552 (478 aa).

An N-terminal signal peptide occupies residues 1 to 26 (MARKTLRARRFFSLIFPFFFITSVYA). H94 lines the heme c pocket. C122, C125, and K126 together coordinate heme. Heme c-binding residues include C160, C163, H164, C209, C212, and H213. 4 residues coordinate Ca(2+): E215, Y216, K261, and Q263. Substrate is bound at residue Y216. A substrate-binding site is contributed by H264. Residues H275, C282, C285, H286, H301, C314, C317, H318, and H393 each contribute to the heme c site.

Belongs to the cytochrome c-552 family. Ca(2+) serves as cofactor. Requires heme c as cofactor.

It is found in the periplasm. The catalysed reaction is 6 Fe(III)-[cytochrome c] + NH4(+) + 2 H2O = 6 Fe(II)-[cytochrome c] + nitrite + 8 H(+). It participates in nitrogen metabolism; nitrate reduction (assimilation). Catalyzes the reduction of nitrite to ammonia, consuming six electrons in the process. This chain is Cytochrome c-552, found in Salmonella agona (strain SL483).